The following is a 269-amino-acid chain: Small ribosomal subunit protein uS2 (269 aa).

The segment at 235-269 (FDAKNPLKPQNYNTLNKRPYQDSPRKPSYQNQNQR) is disordered.

The protein belongs to the universal ribosomal protein uS2 family.

This chain is Small ribosomal subunit protein uS2, found in Aster yellows witches'-broom phytoplasma (strain AYWB).